A 430-amino-acid chain; its full sequence is 3-phosphoshikimate 1-carboxyvinyltransferase (430 aa).

3-phosphoshikimate-binding residues include K23, S24, and R28. K23 is a binding site for phosphoenolpyruvate. Residues G93 and R121 each contribute to the phosphoenolpyruvate site. 3-phosphoshikimate is bound by residues S166, Q168, D313, and K340. Q168 provides a ligand contact to phosphoenolpyruvate. Catalysis depends on D313, which acts as the Proton acceptor. Positions 344 and 386 each coordinate phosphoenolpyruvate.

The protein belongs to the EPSP synthase family. As to quaternary structure, monomer.

Its subcellular location is the cytoplasm. The enzyme catalyses 3-phosphoshikimate + phosphoenolpyruvate = 5-O-(1-carboxyvinyl)-3-phosphoshikimate + phosphate. It functions in the pathway metabolic intermediate biosynthesis; chorismate biosynthesis; chorismate from D-erythrose 4-phosphate and phosphoenolpyruvate: step 6/7. Its function is as follows. Catalyzes the transfer of the enolpyruvyl moiety of phosphoenolpyruvate (PEP) to the 5-hydroxyl of shikimate-3-phosphate (S3P) to produce enolpyruvyl shikimate-3-phosphate and inorganic phosphate. This chain is 3-phosphoshikimate 1-carboxyvinyltransferase, found in Anaeromyxobacter sp. (strain Fw109-5).